The primary structure comprises 150 residues: Large ribosomal subunit protein bL9 (150 aa).

It belongs to the bacterial ribosomal protein bL9 family.

Its function is as follows. Binds to the 23S rRNA. The polypeptide is Large ribosomal subunit protein bL9 (Pectobacterium carotovorum subsp. carotovorum (strain PC1)).